A 342-amino-acid polypeptide reads, in one-letter code: Pre-mRNA-splicing factor 18 (342 aa).

At M1 the chain carries N-acetylmethionine.

Belongs to the PRP18 family. Heterodimer with PPIH. Interacts with PRPF4 and with the spliceosome. Part of a complex containing U4/U6 snRNPs.

The protein resides in the nucleus speckle. In terms of biological role, participates in the second step of pre-mRNA splicing. This is Pre-mRNA-splicing factor 18 (PRPF18) from Bos taurus (Bovine).